Here is a 457-residue protein sequence, read N- to C-terminus: D-xylose transporter (457 aa).

The next 10 helical transmembrane spans lie at 14–34, 46–66, 81–101, 104–124, 131–151, 164–184, 244–264, 281–301, 309–329, and 338–358; these read ALGG…ILFI, GWVV…IGPS, IIFF…TLII, IILG…LAEL, GTVS…AYIT, WMLG…LILP, LIIG…TVLY, LLAH…AVAI, KIVN…SIGM, and AAII…ATWG. Q138 is a binding site for beta-D-xylose. Residues 254 to 255 and N260 each bind beta-D-xylose; that span reads QQ. Beta-D-xylose is bound by residues W362 and N385. Helical transmembrane passes span 380–400 and 402–422; these read FASV…PSLL and FFGT…SIWF.

It belongs to the major facilitator superfamily. Sugar transporter (TC 2.A.1.1) family.

The protein resides in the cell membrane. With respect to regulation, transport is inhibited by 6-deoxy-D-glucose. Uptake of D-xylose across the boundary membrane with the concomitant transport of protons into the cell (symport system). Transport is driven by the proton motive force generated by either malolactic fermentation or by the metabolism of D-glucose. This Levilactobacillus brevis (Lactobacillus brevis) protein is D-xylose transporter.